The sequence spans 312 residues: Atrochrysone carboxyl ACP thioesterase AacuM (312 aa).

Zn(2+) contacts are provided by H103, H105, D107, and H108. The Proton donor/acceptor role is filled by D107.

This sequence belongs to the metallo-beta-lactamase superfamily. It depends on Zn(2+) as a cofactor.

It carries out the reaction atrochrysone carboxyl-[ACP] + H2O = atrochrysone carboxylate + holo-[ACP] + H(+). Its pathway is secondary metabolite biosynthesis. Its function is as follows. Atrochrysone carboxyl ACP thioesterase; part of the gene cluster that mediates the biosynthesis of the tetrahydroxanthone dimer secalonic acid D. The pathway begins with the synthesis of atrochrysone thioester by the polyketide synthase AacuL. The atrochrysone carboxyl ACP thioesterase AacuM then breaks the thioester bond and releases the atrochrysone carboxylic acid from AacuL. Atrochrysone carboxylic acid is decarboxylated by the decarboxylase AacuI, and oxidized by the anthrone oxygenase AacuG to yield emodin. Emodin is then reduced to emodin hydroquinone by a yet unidentified oxidoreductase. A-ring reduction by the short chain dehydrogenase AacuN, dehydration by the scytalone dehydratase-like protein AacuK and probable spontaneous re-oxidation, results in overall deoxygenation to chrysophanol. Baeyer-Villiger oxidation by the Baeyer-Villiger monooxygenase (BVMO) AacuH then yields monodictyphenone. Monodictyphenone is transformed into compounds with the tetrahydroxanthone skeleton via methylesterification by the methyltransferase AacuQ, followed by the action of the flavin-dependent monooxygenase AacuC, the isomerase AacuP, and the short chain dehydrogenase/reductase AacuF or AacuD. AacuF and AacuD should accept the same compound as a substrate but perform the ketoreduction with a different stereoselectivity, thus yielding blennolides B and A, respectively. In the final step of the biosynthesis, the cytochrome P450 monooxygenase AacuE accepts blennolide B and/or blennolide A to conduct the dimerization reaction to furnish the tetrahydroxanthone dimers, secalonic acids D, B, and F. This is Atrochrysone carboxyl ACP thioesterase AacuM from Aspergillus aculeatus (strain ATCC 16872 / CBS 172.66 / WB 5094).